The sequence spans 174 residues: Shikimate kinase (174 aa).

15–20 (GTGKST) is an ATP binding site. Position 19 (Ser19) interacts with Mg(2+). 3 residues coordinate substrate: Asp37, Arg61, and Gly82. Arg120 is an ATP binding site. Arg138 contributes to the substrate binding site.

The protein belongs to the shikimate kinase family. Monomer. Mg(2+) serves as cofactor.

It is found in the cytoplasm. The enzyme catalyses shikimate + ATP = 3-phosphoshikimate + ADP + H(+). The protein operates within metabolic intermediate biosynthesis; chorismate biosynthesis; chorismate from D-erythrose 4-phosphate and phosphoenolpyruvate: step 5/7. Functionally, catalyzes the specific phosphorylation of the 3-hydroxyl group of shikimic acid using ATP as a cosubstrate. The polypeptide is Shikimate kinase (Staphylococcus aureus (strain MSSA476)).